The chain runs to 411 residues: Chorismate synthase (411 aa).

NADP(+)-binding residues include arginine 40 and arginine 46. Residues 135–137 (RAS) and 256–257 (QA) each bind FMN. The segment at 278–299 (HDGIARGADGRPRRTSDRAGGI) is disordered. Positions 285-294 (ADGRPRRTSD) are enriched in basic and acidic residues. Residues alanine 301, 316–320 (KPIAT), and arginine 342 each bind FMN.

Belongs to the chorismate synthase family. In terms of assembly, homotetramer. It depends on FMNH2 as a cofactor.

It catalyses the reaction 5-O-(1-carboxyvinyl)-3-phosphoshikimate = chorismate + phosphate. Its pathway is metabolic intermediate biosynthesis; chorismate biosynthesis; chorismate from D-erythrose 4-phosphate and phosphoenolpyruvate: step 7/7. In terms of biological role, catalyzes the anti-1,4-elimination of the C-3 phosphate and the C-6 proR hydrogen from 5-enolpyruvylshikimate-3-phosphate (EPSP) to yield chorismate, which is the branch point compound that serves as the starting substrate for the three terminal pathways of aromatic amino acid biosynthesis. This reaction introduces a second double bond into the aromatic ring system. The sequence is that of Chorismate synthase from Micrococcus luteus (strain ATCC 4698 / DSM 20030 / JCM 1464 / CCM 169 / CCUG 5858 / IAM 1056 / NBRC 3333 / NCIMB 9278 / NCTC 2665 / VKM Ac-2230) (Micrococcus lysodeikticus).